Reading from the N-terminus, the 400-residue chain is Enoyl-[acyl-carrier-protein] reductase [NADH] (400 aa).

NAD(+) is bound by residues 48-53 (GASTGY), 74-75 (FE), 111-112 (DA), and 139-140 (LA). Tyr-225 is a substrate binding site. The active-site Proton donor is Tyr-235. NAD(+) contacts are provided by residues Lys-244 and 273 to 275 (VVT).

Belongs to the TER reductase family. In terms of assembly, monomer.

The enzyme catalyses a 2,3-saturated acyl-[ACP] + NAD(+) = a (2E)-enoyl-[ACP] + NADH + H(+). It participates in lipid metabolism; fatty acid biosynthesis. In terms of biological role, involved in the final reduction of the elongation cycle of fatty acid synthesis (FAS II). Catalyzes the reduction of a carbon-carbon double bond in an enoyl moiety that is covalently linked to an acyl carrier protein (ACP). The protein is Enoyl-[acyl-carrier-protein] reductase [NADH] of Burkholderia cenocepacia (strain HI2424).